The chain runs to 405 residues: Cystathionine gamma-lyase (405 aa).

Arginine 62, tyrosine 114, and arginine 119 together coordinate substrate. Residue lysine 212 is modified to N6-(pyridoxal phosphate)lysine. A substrate-binding site is contributed by glutamate 339.

Belongs to the trans-sulfuration enzymes family. As to quaternary structure, homotetramer. Interacts with CALM in a calcium-dependent manner. The cofactor is pyridoxal 5'-phosphate. In terms of tissue distribution, highly expressed in liver. Also in muscle and lower expression in most tissues except heart, pituitary gland, spleen, thymus, and vascular tissue, where it is hardly detected.

Its subcellular location is the cytoplasm. The catalysed reaction is L,L-cystathionine + H2O = 2-oxobutanoate + L-cysteine + NH4(+). It catalyses the reaction L-cysteine + H2O = hydrogen sulfide + pyruvate + NH4(+) + H(+). The enzyme catalyses L-homocysteine + H2O = 2-oxobutanoate + hydrogen sulfide + NH4(+) + H(+). It carries out the reaction L-homoserine = 2-oxobutanoate + NH4(+). The catalysed reaction is L-selenocystathionine + H2O = L-selenocysteine + 2-oxobutanoate + NH4(+). The protein operates within amino-acid biosynthesis; L-cysteine biosynthesis; L-cysteine from L-homocysteine and L-serine: step 2/2. With respect to regulation, inhibited by propargylglycine, trifluoroalanine and aminoethoxyvinylglycine. Functionally, catalyzes the last step in the trans-sulfuration pathway from L-methionine to L-cysteine in a pyridoxal-5'-phosphate (PLP)-dependent manner, which consists on cleaving the L,L-cystathionine molecule into L-cysteine, ammonia and 2-oxobutanoate. Part of the L-cysteine derived from the trans-sulfuration pathway is utilized for biosynthesis of the ubiquitous antioxidant glutathione. Besides its role in the conversion of L-cystathionine into L-cysteine, it utilizes L-cysteine and L-homocysteine as substrates (at much lower rates than L,L-cystathionine) to produce the endogenous gaseous signaling molecule hydrogen sulfide (H2S). In vitro, it converts two L-cysteine molecules into lanthionine and H2S, also two L-homocysteine molecules to homolanthionine and H2S, which can be particularly relevant under conditions of severe hyperhomocysteinemia (which is a risk factor for cardiovascular disease, diabetes, and Alzheimer's disease). Lanthionine and homolanthionine are structural homologs of L,L-cystathionine that differ by the absence or presence of an extra methylene group, respectively. Acts as a cysteine-protein sulfhydrase by mediating sulfhydration of target proteins: sulfhydration consists of converting -SH groups into -SSH on specific cysteine residues of target proteins such as GAPDH, PTPN1 and NF-kappa-B subunit RELA, thereby regulating their function. By generating the gasotransmitter H2S, it participates in a number of physiological processes such as vasodilation, bone protection, and inflammation. Plays an essential role in myogenesis by contributing to the biogenesis of H2S in skeletal muscle tissue. Can also accept homoserine as substrate. Catalyzes the elimination of selenocystathionine (which can be derived from the diet) to yield selenocysteine, ammonia and 2-oxobutanoate. The sequence is that of Cystathionine gamma-lyase (CTH) from Homo sapiens (Human).